A 415-amino-acid chain; its full sequence is Tyrosine--tRNA ligase (415 aa).

The short motif at 54 to 63 (PTGTDIHIGH) is the 'HIGH' region element. The short motif at 248-252 (KMSKS) is the 'KMSKS' region element. Residue Lys-251 participates in ATP binding. An S4 RNA-binding domain is found at 351–415 (AKAFYLFSKM…GKKKFLRVST (65 aa)).

It belongs to the class-I aminoacyl-tRNA synthetase family. TyrS type 2 subfamily. Homodimer.

The protein localises to the cytoplasm. It carries out the reaction tRNA(Tyr) + L-tyrosine + ATP = L-tyrosyl-tRNA(Tyr) + AMP + diphosphate + H(+). In terms of biological role, catalyzes the attachment of tyrosine to tRNA(Tyr) in a two-step reaction: tyrosine is first activated by ATP to form Tyr-AMP and then transferred to the acceptor end of tRNA(Tyr). In Prochlorococcus marinus (strain NATL2A), this protein is Tyrosine--tRNA ligase.